The primary structure comprises 361 residues: Phosphoserine aminotransferase (361 aa).

Arg-42 contacts L-glutamate. Residues 76 to 77, Trp-102, Thr-153, Asp-173, and Gln-196 each bind pyridoxal 5'-phosphate; that span reads AR. Lys-197 is modified (N6-(pyridoxal phosphate)lysine). Residue 238–239 coordinates pyridoxal 5'-phosphate; sequence NT.

The protein belongs to the class-V pyridoxal-phosphate-dependent aminotransferase family. SerC subfamily. Homodimer. The cofactor is pyridoxal 5'-phosphate.

It localises to the cytoplasm. The enzyme catalyses O-phospho-L-serine + 2-oxoglutarate = 3-phosphooxypyruvate + L-glutamate. It catalyses the reaction 4-(phosphooxy)-L-threonine + 2-oxoglutarate = (R)-3-hydroxy-2-oxo-4-phosphooxybutanoate + L-glutamate. It functions in the pathway amino-acid biosynthesis; L-serine biosynthesis; L-serine from 3-phospho-D-glycerate: step 2/3. The protein operates within cofactor biosynthesis; pyridoxine 5'-phosphate biosynthesis; pyridoxine 5'-phosphate from D-erythrose 4-phosphate: step 3/5. In terms of biological role, catalyzes the reversible conversion of 3-phosphohydroxypyruvate to phosphoserine and of 3-hydroxy-2-oxo-4-phosphonooxybutanoate to phosphohydroxythreonine. This Pectobacterium carotovorum subsp. carotovorum (strain PC1) protein is Phosphoserine aminotransferase.